A 699-amino-acid chain; its full sequence is MDNNGGGSSGNEQYTSGDAKQNGKRTCHRHTPQQIQRLEAYFKECPHPDERQRNQLCRELKLEPDQIKFWFQNKRTQSKTQEDRSTNVLLRGENETLQSDNEAMLDALKSVLCPACGGPPFGREERGHNLQKLRFENARLKDHRDRISNFVDQHKPNEPTVEDSLAYVPSLDRISYGINGGNMYEPSSSYGPPNFQIIQPRPLAETDMSLLSEIAASAVEELKRLFLAEEQFWVKSCIDETYVIDTESYERFSHAVKHFSSTTAHVESSKAVTVVHVEAINLIQMFLDPEKWKELFPTIVNKANTIHVLGSGLPIRGNCNVLQVMWEQLHILSPLVPAREFMVVRCCQEIEKGIWIIADVSHRANFDFGNAACYKRPSGCLIQALPDAHSKVMWIEHVEVDHKLDTHKIYRDLLSGGSGYGAKRWIVTLERMCERMALSSIQTLPPSDRSEVITTGEARRSVMKLGERMVKNFNEMLTMSGKIDFPQQSKNGVRVSIRMNIEAGQPPGIVVSASSSLAIPLTPLQVFAFLQNLDTRQQWDILSYGTVVNEIARIVTGSSETNCVTILRVHPTHEENNDKMVVQDSCKDDMLMLQDCYMDALGGMIVYAPMDMATMHFAVSGEVDPSHIPILPSGFVISSDGRRSTVEDGGTLLTVAFQILVSGKANRSREVNEKSVDTVSALISSTIQRIKGLLNCPEC.

The disordered stretch occupies residues 1 to 31; sequence MDNNGGGSSGNEQYTSGDAKQNGKRTCHRHT. The segment covering 10–19 has biased composition (polar residues); sequence GNEQYTSGDA. Basic residues predominate over residues 22 to 31; the sequence is NGKRTCHRHT. Residues 23-82 constitute a DNA-binding region (homeobox); that stretch reads GKRTCHRHTPQQIQRLEAYFKECPHPDERQRNQLCRELKLEPDQIKFWFQNKRTQSKTQE. Positions 89–149 form a coiled coil; it reads LLRGENETLQ…LKDHRDRISN (61 aa). Positions 204–438 constitute an START domain; it reads AETDMSLLSE…LERMCERMAL (235 aa).

It belongs to the HD-ZIP homeobox family. Class IV subfamily. Interacts with ANT. In terms of tissue distribution, expressed in the embryo at early stage and in the endosperm.

The protein localises to the nucleus. In terms of biological role, probable transcription factor. The polypeptide is Homeobox-leucine zipper protein HDG8 (Arabidopsis thaliana (Mouse-ear cress)).